Here is a 600-residue protein sequence, read N- to C-terminus: Glutamine--fructose-6-phosphate aminotransferase [isomerizing] (600 aa).

Catalysis depends on C2, which acts as the Nucleophile; for GATase activity. The Glutamine amidotransferase type-2 domain maps to 2–217 (CGIVGYIGYQ…DGELVIVTSE (216 aa)). 2 consecutive SIS domains span residues 283-422 (IINE…AKGF) and 452-590 (IASD…VDKP). The active-site For Fru-6P isomerization activity is the K595.

Homodimer.

Its subcellular location is the cytoplasm. The catalysed reaction is D-fructose 6-phosphate + L-glutamine = D-glucosamine 6-phosphate + L-glutamate. In terms of biological role, catalyzes the first step in hexosamine metabolism, converting fructose-6P into glucosamine-6P using glutamine as a nitrogen source. The polypeptide is Glutamine--fructose-6-phosphate aminotransferase [isomerizing] (Geobacillus kaustophilus (strain HTA426)).